Here is a 318-residue protein sequence, read N- to C-terminus: Mitochondrial thiamine pyrophosphate carrier 1 (318 aa).

The next 6 membrane-spanning stretches (helical) occupy residues 12 to 28 (GTRR…GLVS), 91 to 107 (LMYV…YRTT), 125 to 141 (SFVA…ASTY), 181 to 197 (GCSA…GLFF), 221 to 237 (AAGV…VFPL), and 284 to 301 (GLTV…VTMW). Solcar repeat units lie at residues 12–110 (GTRR…TTQA), 120–206 (PPPA…LRPV), and 214–309 (PFGS…SLHY).

It belongs to the mitochondrial carrier (TC 2.A.29) family.

It localises to the mitochondrion inner membrane. Its function is as follows. Mitochondrial transporter that mediates uptake of thiamine pyrophosphate (ThPP) into mitochondria. This Aspergillus oryzae (strain ATCC 42149 / RIB 40) (Yellow koji mold) protein is Mitochondrial thiamine pyrophosphate carrier 1 (tpc1).